Consider the following 131-residue polypeptide: Auxin-responsive protein SAUR77 (131 aa).

Belongs to the ARG7 family.

May be involved in the regulation of ethylene receptor signaling. Promotes cell expansion and plant growth. The chain is Auxin-responsive protein SAUR77 from Arabidopsis thaliana (Mouse-ear cress).